A 528-amino-acid chain; its full sequence is Chaperonin GroEL, chloroplastic (528 aa).

Residues 29–32, 86–90, Gly-414, and Asp-496 contribute to the ATP site; these read TLGP and DGTTT.

It belongs to the chaperonin (HSP60) family. As to quaternary structure, forms a cylinder of 14 subunits composed of two heptameric rings stacked back-to-back. Interacts with the co-chaperonin GroES.

Its subcellular location is the plastid. The protein resides in the chloroplast. It carries out the reaction ATP + H2O + a folded polypeptide = ADP + phosphate + an unfolded polypeptide.. In terms of biological role, together with its co-chaperonin GroES, plays an essential role in assisting protein folding. The GroEL-GroES system forms a nano-cage that allows encapsulation of the non-native substrate proteins and provides a physical environment optimized to promote and accelerate protein folding. The polypeptide is Chaperonin GroEL, chloroplastic (Gracilaria tenuistipitata var. liui (Red alga)).